A 24-amino-acid chain; its full sequence is M-poneritoxin-Ng2b (24 aa).

L24 carries the post-translational modification Leucine amide.

Expressed by the venom gland.

Its subcellular location is the secreted. Functionally, has a broad spectrum of activity against both Gram-positive and Gram-negative bacteria. Is inactive against yeast, erythrocytes, and insects. The polypeptide is M-poneritoxin-Ng2b (Neoponera goeldii (Ponerine ant)).